The chain runs to 129 residues: Small ribosomal subunit protein uS11 (129 aa).

Belongs to the universal ribosomal protein uS11 family. As to quaternary structure, part of the 30S ribosomal subunit. Interacts with proteins S7 and S18. Binds to IF-3.

In terms of biological role, located on the platform of the 30S subunit, it bridges several disparate RNA helices of the 16S rRNA. Forms part of the Shine-Dalgarno cleft in the 70S ribosome. This chain is Small ribosomal subunit protein uS11, found in Salmonella newport (strain SL254).